The following is an 858-amino-acid chain: Protein VACUOLELESS1 (858 aa).

The protein belongs to the VPS16 family. Core component of at least two putative endosomal tethering complexes, the homotypic fusion and vacuole protein sorting (HOPS) complex and the class C core vacuole/endosome tethering (CORVET) complex. Their common core is composed of the class C Vps proteins VPS11, VCL1, VPS18 and VPS33, which in HOPS further associates with VPS39 and VPS41 and in CORVET with VPS3. As to expression, expressed in roots, leaves, stems, siliques, flowers and mature pollen.

It localises to the vacuole membrane. Its subcellular location is the prevacuolar compartment membrane. In terms of biological role, required for vacuole biogenesis and vacuole enlargment in dividing and expanding cells. Involved in the docking or fusion of prevacuolar vesicles. Important for the function of both male and female gametophytes, but is not essential for the germination and development of pollen. This is Protein VACUOLELESS1 (VCL1) from Arabidopsis thaliana (Mouse-ear cress).